The primary structure comprises 372 residues: N-methyl-L-tryptophan oxidase (372 aa).

FAD is bound at residue 4–34 (DLIIIGSGSVGAAAGYYATRAGLKVLMTDAH). The residue at position 307 (C307) is an S-8alpha-FAD cysteine.

Belongs to the MSOX/MTOX family. MTOX subfamily. In terms of assembly, monomer. FAD is required as a cofactor.

The enzyme catalyses N(alpha)-methyl-L-tryptophan + O2 + H2O = L-tryptophan + formaldehyde + H2O2. Catalyzes the oxidative demethylation of N-methyl-L-tryptophan. In Salmonella typhimurium (strain LT2 / SGSC1412 / ATCC 700720), this protein is N-methyl-L-tryptophan oxidase.